A 232-amino-acid chain; its full sequence is Ribose-5-phosphate isomerase A (232 aa).

Substrate is bound by residues 31–34, 87–90, and 100–103; these read TGST, DGAD, and KGGG. Glu109 serves as the catalytic Proton acceptor. Residue Lys127 participates in substrate binding.

It belongs to the ribose 5-phosphate isomerase family. Homodimer.

The enzyme catalyses aldehydo-D-ribose 5-phosphate = D-ribulose 5-phosphate. It participates in carbohydrate degradation; pentose phosphate pathway; D-ribose 5-phosphate from D-ribulose 5-phosphate (non-oxidative stage): step 1/1. Its function is as follows. Catalyzes the reversible conversion of ribose-5-phosphate to ribulose 5-phosphate. The sequence is that of Ribose-5-phosphate isomerase A from Bifidobacterium adolescentis (strain ATCC 15703 / DSM 20083 / NCTC 11814 / E194a).